Here is a 177-residue protein sequence, read N- to C-terminus: MKKILNLLPIFTFFIFYRFYDIFIASKSLIFISGLTCLLYWIIYKEIDKINLFSFITIAIFGSLTIIFHNSQFIKWKITIIYMIFSVILFISQFFMKKPIIQRFLEKDIKISDLYWKKINFFWALFFLFCSILNIYVALCLPEKIWVNFKVFGLSFLMFLSILITSIYINFKMLKEK.

Helical transmembrane passes span 22 to 42, 50 to 70, 76 to 96, 121 to 141, and 151 to 171; these read IFIA…LYWI, INLF…IFHN, WKIT…QFFM, FFWA…ALCL, and VFGL…YINF.

Belongs to the YciB family.

The protein resides in the cell inner membrane. Plays a role in cell envelope biogenesis, maintenance of cell envelope integrity and membrane homeostasis. The chain is Inner membrane-spanning protein YciB from Buchnera aphidicola subsp. Schizaphis graminum (strain Sg).